The sequence spans 167 residues: CS6 fimbrial subunit B (167 aa).

The N-terminal stretch at 1-21 (MLKKIIPAIVLIAGTSGVVNA) is a signal peptide.

It is found in the fimbrium. This Escherichia coli protein is CS6 fimbrial subunit B (cssB).